The primary structure comprises 108 residues: Guanine nucleotide-binding protein subunit gamma (108 aa).

Cysteine 104 carries S-palmitoyl cysteine lipidation. Residue cysteine 105 is modified to Cysteine methyl ester. Cysteine 105 is lipidated: S-farnesyl cysteine. A propeptide spans 106–108 (VIS) (removed in mature form).

The protein belongs to the G protein gamma family. G proteins are composed of 3 units, alpha, beta and gamma.

It localises to the membrane. In Yarrowia lipolytica (strain CLIB 122 / E 150) (Yeast), this protein is Guanine nucleotide-binding protein subunit gamma.